Reading from the N-terminus, the 802-residue chain is Aldehyde dehydrogenase family 16 member A1 (802 aa).

Residues 513 to 554 (SLPSGPETGPSPAPPYGLFVRGRFQSPGTQSSRPIKDSSGKV) are disordered.

Belongs to the aldehyde dehydrogenase family. In terms of assembly, interacts with SPG21.

This is Aldehyde dehydrogenase family 16 member A1 (Aldh16a1) from Rattus norvegicus (Rat).